The following is a 41-amino-acid chain: Photosystem I reaction center subunit IX (41 aa).

A helical membrane pass occupies residues 7 to 29 (YLSTAPVLLTVWLSITASGIMII).

The protein belongs to the PsaJ family.

It localises to the plastid. It is found in the chloroplast thylakoid membrane. May help in the organization of the PsaE and PsaF subunits. The sequence is that of Photosystem I reaction center subunit IX from Heterosigma akashiwo (strain NIES-293 / 8280G21-1).